Here is a 3106-residue protein sequence, read N- to C-terminus: Probable polyketide synthase 29 (3106 aa).

Over residues Met1–Ser11 the composition is skewed to polar residues. Residues Met1–Tyr20 form a disordered region. The region spanning Ser28–Glu461 is the Ketosynthase family 3 (KS3) domain. Residues Cys200, His339, and His384 each act as for beta-ketoacyl synthase activity in the active site. The interval Gly661 to Tyr694 is acyl/malonyl transferase. Residue Ser671 is the For acyl/malonyl transferase activity of the active site. The segment at Pro961–Ser1082 is N-terminal hotdog fold. The PKS/mFAS DH domain occupies Pro961–Pro1266. The Proton acceptor; for dehydratase activity role is filled by His994. The C-terminal hotdog fold stretch occupies residues Asn1099–Pro1266. Asp1171 functions as the Proton donor; for dehydratase activity in the catalytic mechanism. One can recognise a Carrier domain in the interval Asn2533 to His2610. Ser2570 carries the post-translational modification O-(pantetheine 4'-phosphoryl)serine. Residues Ala2609–Asn2656 adopt a coiled-coil conformation. The segment at Asn2614–Asn2656 is disordered.

Requires pantetheine 4'-phosphate as cofactor.

Its function is as follows. Probable polyketide synthase. In Dictyostelium discoideum (Social amoeba), this protein is Probable polyketide synthase 29 (pks29).